We begin with the raw amino-acid sequence, 158 residues long: Probable cyclic pyranopterin monophosphate synthase (158 aa).

Substrate-binding positions include Met78–His80 and Met114–Glu115. Asp129 is an active-site residue.

This sequence belongs to the MoaC family. In terms of assembly, homohexamer; trimer of dimers.

It catalyses the reaction (8S)-3',8-cyclo-7,8-dihydroguanosine 5'-triphosphate = cyclic pyranopterin phosphate + diphosphate. Its pathway is cofactor biosynthesis; molybdopterin biosynthesis. In terms of biological role, catalyzes the conversion of (8S)-3',8-cyclo-7,8-dihydroguanosine 5'-triphosphate to cyclic pyranopterin monophosphate (cPMP). This Methanosarcina acetivorans (strain ATCC 35395 / DSM 2834 / JCM 12185 / C2A) protein is Probable cyclic pyranopterin monophosphate synthase.